The sequence spans 210 residues: MKVNVSCSSVQTTIDILEENQGEDESILTLGQLRDRIATDNDVDVETMKLLHRGKFLQGADDVSLSTLNFKENDKIIVMGGKNALVDDAGFKMLMQYEKHNLSNLQKAYDLNLRDVADLERGFLEKPKQVEMGKKLEKKVKYFNEEAERHLETLDGMNIITETTPENQAKRNREKRKTLVNGIQTLLNQNDALLRRLQEYQSVLNGDIPE.

The Ubiquitin-like domain maps to 8-85; sequence SSVQTTIDIL…IIVMGGKNAL (78 aa). Residues 108–194 form the BAG domain; the sequence is AYDLNLRDVA…TLLNQNDALL (87 aa).

In terms of assembly, homodimer or homotetramer.

In terms of biological role, may inhibit the chaperone activity of HSP70/HSC70 by promoting substrate release in an ATP-dependent manner. This Caenorhabditis elegans protein is BAG family molecular chaperone regulator 1 (bag-1).